The following is a 381-amino-acid chain: Cytochrome b (381 aa).

4 consecutive transmembrane segments (helical) span residues 34 to 54, 78 to 99, 114 to 134, and 179 to 199; these read FGSL…FLAM, WLIR…YLHI, WNIG…GYVL, and FFAF…IHLL. The heme b site is built by H84 and H98. The heme b site is built by H183 and H197. H202 provides a ligand contact to a ubiquinone. Transmembrane regions (helical) follow at residues 227–247, 289–309, 321–341, and 348–368; these read YKDL…ALFM, LGGV…PLLH, LTQI…WIGG, and FITV…IIMP.

Belongs to the cytochrome b family. In terms of assembly, the cytochrome bc1 complex contains 3 respiratory subunits (MT-CYB, CYC1 and UQCRFS1), 2 core proteins (UQCRC1 and UQCRC2) and probably 6 low-molecular weight proteins. The cofactor is heme b.

The protein localises to the mitochondrion inner membrane. Its function is as follows. Component of the ubiquinol-cytochrome c reductase complex (complex III or cytochrome b-c1 complex) that is part of the mitochondrial respiratory chain. The b-c1 complex mediates electron transfer from ubiquinol to cytochrome c. Contributes to the generation of a proton gradient across the mitochondrial membrane that is then used for ATP synthesis. This is Cytochrome b (mt-cyb) from Sphyrna tiburo vespertina (Pacific bonnethead shark).